Consider the following 190-residue polypeptide: Large ribosomal subunit protein uL5 (190 aa).

The protein belongs to the universal ribosomal protein uL5 family. In terms of assembly, part of the 50S ribosomal subunit; part of the 5S rRNA/L5/L18/L25 subcomplex. Contacts the 5S rRNA and the P site tRNA. Forms a bridge to the 30S subunit in the 70S ribosome.

In terms of biological role, this is one of the proteins that bind and probably mediate the attachment of the 5S RNA into the large ribosomal subunit, where it forms part of the central protuberance. In the 70S ribosome it contacts protein S13 of the 30S subunit (bridge B1b), connecting the 2 subunits; this bridge is implicated in subunit movement. Contacts the P site tRNA; the 5S rRNA and some of its associated proteins might help stabilize positioning of ribosome-bound tRNAs. The polypeptide is Large ribosomal subunit protein uL5 (Corynebacterium efficiens (strain DSM 44549 / YS-314 / AJ 12310 / JCM 11189 / NBRC 100395)).